The sequence spans 475 residues: Ribulose bisphosphate carboxylase large chain (475 aa).

The propeptide occupies 1–2; sequence MA. Pro3 is subject to N-acetylproline. The substrate site is built by Asn123 and Thr173. The active-site Proton acceptor is the Lys175. Lys177 contributes to the substrate binding site. Positions 201, 203, and 204 each coordinate Mg(2+). The residue at position 201 (Lys201) is an N6-carboxylysine. The active-site Proton acceptor is the His294. Substrate is bound by residues Arg295, His327, and Ser379.

Belongs to the RuBisCO large chain family. Type I subfamily. Heterohexadecamer of 8 large chains and 8 small chains. Mg(2+) serves as cofactor.

It localises to the plastid. Its subcellular location is the chloroplast. It catalyses the reaction 2 (2R)-3-phosphoglycerate + 2 H(+) = D-ribulose 1,5-bisphosphate + CO2 + H2O. The catalysed reaction is D-ribulose 1,5-bisphosphate + O2 = 2-phosphoglycolate + (2R)-3-phosphoglycerate + 2 H(+). Its function is as follows. RuBisCO catalyzes two reactions: the carboxylation of D-ribulose 1,5-bisphosphate, the primary event in carbon dioxide fixation, as well as the oxidative fragmentation of the pentose substrate in the photorespiration process. Both reactions occur simultaneously and in competition at the same active site. This Ostreococcus tauri protein is Ribulose bisphosphate carboxylase large chain.